The primary structure comprises 1238 residues: Topoisomerase 1-associated factor 1 (1238 aa).

Ser626 and Ser654 each carry phosphoserine. The tract at residues 1008–1051 (GIARSKKKDKRKRRKGEAKTNLPMFGDQDDERPQTVRERHGVFS) is disordered. The span at 1010 to 1023 (ARSKKKDKRKRRKG) shows a compositional bias: basic residues. The segment covering 1038–1050 (ERPQTVRERHGVF) has biased composition (basic and acidic residues). 2 positions are modified to phosphoserine: Ser1056 and Ser1058. The interval 1159-1218 (NNNNNQLSDDDVNSESRNSLGSSQPSNSQNMFQSEVYSRKESTKRSLEASAADESDEDEE) is disordered. The span at 1173–1194 (ESRNSLGSSQPSNSQNMFQSEV) shows a compositional bias: polar residues. Positions 1195-1205 (YSRKESTKRSL) are enriched in basic and acidic residues. The segment covering 1209-1218 (AADESDEDEE) has biased composition (acidic residues). Position 1213 is a phosphoserine (Ser1213).

Belongs to the timeless family. As to quaternary structure, component of the fork protection complex (FPC) consisting of TOF1 and CSM3. Interacts with WSS1 and ESC4.

The protein resides in the nucleus. In terms of biological role, forms a fork protection complex (FPC) with CSM3 and which is required for chromosome segregation during meiosis and DNA damage repair. FPC coordinates leading and lagging strand synthesis and moves with the replication fork. FPC stabilizes replication forks in a configuration that is recognized by replication checkpoint sensors and protects stalled replication forks against the fork-releasing activity of RRM3 helicase. In Saccharomyces cerevisiae (strain ATCC 204508 / S288c) (Baker's yeast), this protein is Topoisomerase 1-associated factor 1 (TOF1).